Here is a 155-residue protein sequence, read N- to C-terminus: RNA-binding protein 3 (155 aa).

One can recognise an RRM domain in the interval 6-84 (GKLFVGGLNF…RQIRVDHAGK (79 aa)). Residue Arg-47 is modified to Omega-N-methylarginine. The segment at 79–155 (VDHAGKSARG…GGNYRDNYDN (77 aa)) is disordered. Arg-105 carries the post-translational modification Asymmetric dimethylarginine; alternate. Arg-105 is subject to Dimethylated arginine; alternate. Arg-105 carries the omega-N-methylarginine; alternate modification. Positions 105–114 (RGGGDQGYGS) are enriched in gly residues. Residues Arg-120 and Arg-130 each carry the omega-N-methylarginine modification. 2 positions are modified to phosphoserine: Ser-135 and Ser-145. Position 153 is a phosphotyrosine (Tyr-153).

As to quaternary structure, interacts with RPL4. Associates with the 60S ribosomal subunits. Post-translationally, arg-105 is dimethylated, probably to asymmetric dimethylarginine. Phosphorylated. Isoform 2 is methylated. As to expression, widely expressed in the brain. Highly expressed in the cerebellum and olfactory bulb (at protein level). Expressed in neurons and glial cells.

The protein localises to the nucleus. It localises to the cytoplasm. Its subcellular location is the cell projection. The protein resides in the dendrite. Functionally, cold-inducible mRNA binding protein that enhances global protein synthesis at both physiological and mild hypothermic temperatures. Reduces the relative abundance of microRNAs, when overexpressed. Enhances phosphorylation of translation initiation factors and active polysome formation. This is RNA-binding protein 3 (Rbm3) from Rattus norvegicus (Rat).